The sequence spans 330 residues: GTPase Obg (330 aa).

Positions 1 to 159 constitute an Obg domain; the sequence is MHFIDEVKIY…MWIHLRLKLL (159 aa). One can recognise an OBG-type G domain in the interval 160-327; sequence SDVGLVGLPN…IVKLALEIIK (168 aa). Residues 166–173, 191–195, 212–215, 279–282, and 308–310 contribute to the GTP site; these read GLPNAGKS, FTTLV, DIPG, NKCD, and STY. Mg(2+) contacts are provided by serine 173 and threonine 193.

It belongs to the TRAFAC class OBG-HflX-like GTPase superfamily. OBG GTPase family. Monomer. Requires Mg(2+) as cofactor.

The protein localises to the cytoplasm. Functionally, an essential GTPase which binds GTP, GDP and possibly (p)ppGpp with moderate affinity, with high nucleotide exchange rates and a fairly low GTP hydrolysis rate. Plays a role in control of the cell cycle, stress response, ribosome biogenesis and in those bacteria that undergo differentiation, in morphogenesis control. In Rickettsia typhi (strain ATCC VR-144 / Wilmington), this protein is GTPase Obg.